A 299-amino-acid chain; its full sequence is Acetaldehyde dehydrogenase (299 aa).

The active-site Acyl-thioester intermediate is cysteine 126. NAD(+) is bound by residues 157-165 (SAGPGTRQN) and asparagine 267.

It belongs to the acetaldehyde dehydrogenase family.

It carries out the reaction acetaldehyde + NAD(+) + CoA = acetyl-CoA + NADH + H(+). In Carboxydothermus hydrogenoformans (strain ATCC BAA-161 / DSM 6008 / Z-2901), this protein is Acetaldehyde dehydrogenase (mhpF).